Reading from the N-terminus, the 320-residue chain is Cell division protein FtsQ (320 aa).

Residues 1 to 24 (MAQTIKRGGKGVRRATAARSAQRK) are disordered. Over 1 to 52 (MAQTIKRGGKGVRRATAARSAQRKVQTARQQTGSVLDSVLRWLPFSEETLHR) the chain is Cytoplasmic. A helical membrane pass occupies residues 53–73 (ILMTLILAAAAGLVWTVAVMA). Residues 74–320 (GIPALVSEQA…RAASAKSDEG (247 aa)) lie on the Periplasmic side of the membrane. A POTRA domain is found at 92–160 (FKVSHLEVRG…DTLVIDIVER (69 aa)). Residues 296–320 (AAEKRAEEQARAEAKRAASAKSDEG) are disordered.

Belongs to the FtsQ/DivIB family. FtsQ subfamily.

It localises to the cell inner membrane. Functionally, essential cell division protein. The protein is Cell division protein FtsQ of Novosphingobium aromaticivorans (strain ATCC 700278 / DSM 12444 / CCUG 56034 / CIP 105152 / NBRC 16084 / F199).